A 92-amino-acid polypeptide reads, in one-letter code: Small ribosomal subunit protein uS19 (92 aa).

This sequence belongs to the universal ribosomal protein uS19 family.

In terms of biological role, protein S19 forms a complex with S13 that binds strongly to the 16S ribosomal RNA. The protein is Small ribosomal subunit protein uS19 of Leptospira biflexa serovar Patoc (strain Patoc 1 / Ames).